The sequence spans 104 residues: Large ribosomal subunit protein uL24 (104 aa).

The protein belongs to the universal ribosomal protein uL24 family. In terms of assembly, part of the 50S ribosomal subunit.

Its function is as follows. One of two assembly initiator proteins, it binds directly to the 5'-end of the 23S rRNA, where it nucleates assembly of the 50S subunit. In terms of biological role, one of the proteins that surrounds the polypeptide exit tunnel on the outside of the subunit. This is Large ribosomal subunit protein uL24 from Bartonella bacilliformis (strain ATCC 35685 / KC583 / Herrer 020/F12,63).